Reading from the N-terminus, the 221-residue chain is Thiamine-phosphate synthase (221 aa).

4-amino-2-methyl-5-(diphosphooxymethyl)pyrimidine-binding positions include 44–48 and Asn-79; that span reads QFREK. 2 residues coordinate Mg(2+): Asp-80 and Asp-99. Ser-117 is a binding site for 4-amino-2-methyl-5-(diphosphooxymethyl)pyrimidine. A 2-[(2R,5Z)-2-carboxy-4-methylthiazol-5(2H)-ylidene]ethyl phosphate-binding site is contributed by 143–145; the sequence is TRS. Lys-146 serves as a coordination point for 4-amino-2-methyl-5-(diphosphooxymethyl)pyrimidine. 2-[(2R,5Z)-2-carboxy-4-methylthiazol-5(2H)-ylidene]ethyl phosphate is bound by residues Gly-175 and 195–196; that span reads IS.

It belongs to the thiamine-phosphate synthase family. Mg(2+) serves as cofactor.

The catalysed reaction is 2-[(2R,5Z)-2-carboxy-4-methylthiazol-5(2H)-ylidene]ethyl phosphate + 4-amino-2-methyl-5-(diphosphooxymethyl)pyrimidine + 2 H(+) = thiamine phosphate + CO2 + diphosphate. It carries out the reaction 2-(2-carboxy-4-methylthiazol-5-yl)ethyl phosphate + 4-amino-2-methyl-5-(diphosphooxymethyl)pyrimidine + 2 H(+) = thiamine phosphate + CO2 + diphosphate. It catalyses the reaction 4-methyl-5-(2-phosphooxyethyl)-thiazole + 4-amino-2-methyl-5-(diphosphooxymethyl)pyrimidine + H(+) = thiamine phosphate + diphosphate. It functions in the pathway cofactor biosynthesis; thiamine diphosphate biosynthesis; thiamine phosphate from 4-amino-2-methyl-5-diphosphomethylpyrimidine and 4-methyl-5-(2-phosphoethyl)-thiazole: step 1/1. Its function is as follows. Condenses 4-methyl-5-(beta-hydroxyethyl)thiazole monophosphate (THZ-P) and 2-methyl-4-amino-5-hydroxymethyl pyrimidine pyrophosphate (HMP-PP) to form thiamine monophosphate (TMP). The polypeptide is Thiamine-phosphate synthase (Geobacillus thermodenitrificans (strain NG80-2)).